Consider the following 386-residue polypeptide: Ferrochelatase (386 aa).

2 residues coordinate Fe cation: His196 and Glu277.

This sequence belongs to the ferrochelatase family.

It is found in the cytoplasm. It catalyses the reaction heme b + 2 H(+) = protoporphyrin IX + Fe(2+). It participates in porphyrin-containing compound metabolism; protoheme biosynthesis; protoheme from protoporphyrin-IX: step 1/1. Functionally, catalyzes the ferrous insertion into protoporphyrin IX. In Picosynechococcus sp. (strain ATCC 27264 / PCC 7002 / PR-6) (Agmenellum quadruplicatum), this protein is Ferrochelatase.